The following is a 318-amino-acid chain: Mitochondrial coenzyme A transporter SLC25A42 (318 aa).

3 Solcar repeats span residues 31-117 (RQVL…YKRI), 129-214 (LPPW…LKSL), and 224-312 (PYPF…MQIL). A run of 6 helical transmembrane segments spans residues 33–53 (VLSS…AVAP), 89–109 (LWRG…IQFS), 135–155 (LFAG…LDLV), 186–206 (LYHG…LSFF), 230–250 (MIFG…LDVV), and 293–313 (VKGP…QILL).

The protein belongs to the mitochondrial carrier (TC 2.A.29) family.

Its subcellular location is the mitochondrion inner membrane. It carries out the reaction ADP(out) + CoA(in) = ADP(in) + CoA(out). The catalysed reaction is 3'-dephospho-CoA(in) + ADP(out) = 3'-dephospho-CoA(out) + ADP(in). The enzyme catalyses adenosine 3',5'-bisphosphate(in) + ADP(out) = adenosine 3',5'-bisphosphate(out) + ADP(in). It catalyses the reaction AMP(in) + ADP(out) = AMP(out) + ADP(in). It carries out the reaction dADP(in) + ADP(out) = dADP(out) + ADP(in). The catalysed reaction is ADP(in) + ATP(out) = ADP(out) + ATP(in). Functionally, mitochondrial carrier mediating the transport of coenzyme A (CoA) in mitochondria in exchange for intramitochondrial (deoxy)adenine nucleotides and adenosine 3',5'-diphosphate. This Homo sapiens (Human) protein is Mitochondrial coenzyme A transporter SLC25A42 (SLC25A42).